Reading from the N-terminus, the 503-residue chain is Arabinose import ATP-binding protein AraG 1 (503 aa).

ABC transporter domains are found at residues Leu5–Arg240 and Leu253–Gly497. Gly37–Ser44 is an ATP binding site.

This sequence belongs to the ABC transporter superfamily. Arabinose importer (TC 3.A.1.2.2) family. As to quaternary structure, the complex is composed of two ATP-binding proteins (AraG), two transmembrane proteins (AraH) and a solute-binding protein (AraF).

The protein localises to the cell inner membrane. It catalyses the reaction L-arabinose(out) + ATP + H2O = L-arabinose(in) + ADP + phosphate + H(+). In terms of biological role, part of the ABC transporter complex AraFGH involved in arabinose import. Responsible for energy coupling to the transport system. This Burkholderia thailandensis (strain ATCC 700388 / DSM 13276 / CCUG 48851 / CIP 106301 / E264) protein is Arabinose import ATP-binding protein AraG 1.